A 312-amino-acid chain; its full sequence is Elongation factor Ts (312 aa).

An involved in Mg(2+) ion dislocation from EF-Tu region spans residues 84 to 87 (TDFV).

Belongs to the EF-Ts family.

It is found in the cytoplasm. Its function is as follows. Associates with the EF-Tu.GDP complex and induces the exchange of GDP to GTP. It remains bound to the aminoacyl-tRNA.EF-Tu.GTP complex up to the GTP hydrolysis stage on the ribosome. This is Elongation factor Ts from Caulobacter vibrioides (strain ATCC 19089 / CIP 103742 / CB 15) (Caulobacter crescentus).